Here is a 341-residue protein sequence, read N- to C-terminus: Hygromycin-B 4-O-kinase (341 aa).

Residue Asp198 is the Proton acceptor of the active site.

Belongs to the aminoglycoside phosphotransferase family.

The enzyme catalyses hygromycin B + ATP = 4-O-phosphohygromycin B + ADP + H(+). Functionally, the aminoglycoside phosphotransferases achieve inactivation of their antibiotic substrates by phosphorylation. Only phosphorylates hygromycin and closely related compounds such as demethyl analogs and destomycin. The protein is Hygromycin-B 4-O-kinase (hph) of Escherichia coli.